Here is a 405-residue protein sequence, read N- to C-terminus: Adenylosuccinate synthetase (405 aa).

GTP-binding positions include 12-18 and 40-42; these read GDEGKGK and GHT. Asp13 (proton acceptor) is an active-site residue. Mg(2+) is bound by residues Asp13 and Gly40. Residues 13-16, 38-41, Thr121, Arg135, Gln213, Thr228, and Arg297 contribute to the IMP site; these read DEGK and NAGH. His41 acts as the Proton donor in catalysis. 293 to 299 is a substrate binding site; that stretch reads TTTGRPR. GTP is bound by residues Arg299, 325–327, and 390–392; these read KMD and SAG.

The protein belongs to the adenylosuccinate synthetase family. As to quaternary structure, homodimer. The cofactor is Mg(2+).

It localises to the cytoplasm. The enzyme catalyses IMP + L-aspartate + GTP = N(6)-(1,2-dicarboxyethyl)-AMP + GDP + phosphate + 2 H(+). It functions in the pathway purine metabolism; AMP biosynthesis via de novo pathway; AMP from IMP: step 1/2. Functionally, plays an important role in the de novo pathway of purine nucleotide biosynthesis. Catalyzes the first committed step in the biosynthesis of AMP from IMP. The chain is Adenylosuccinate synthetase from Deinococcus radiodurans (strain ATCC 13939 / DSM 20539 / JCM 16871 / CCUG 27074 / LMG 4051 / NBRC 15346 / NCIMB 9279 / VKM B-1422 / R1).